Reading from the N-terminus, the 255-residue chain is uncharacterized protein (255 aa).

Positions 253–255 match the Microbody targeting signal motif; that stretch reads SKI.

Belongs to the enoyl-CoA hydratase/isomerase family.

Its subcellular location is the peroxisome. This is an uncharacterized protein from Caenorhabditis elegans.